The chain runs to 227 residues: Ornithine decarboxylase antizyme 1 (227 aa).

Belongs to the ODC antizyme family. As to quaternary structure, interacts with ODC1 and thereby sterically blocks ODC homodimerization. Forms a ternary complex with PSMB4 and OAZ1 before PSMB4 is incorporated into the 20S proteasome. Interacts with AZIN2; this interaction disrupts the interaction between the antizyme and ODC1. Interacts with FAM171A1.

Functionally, ornithine decarboxylase (ODC) antizyme protein that negatively regulates ODC activity and intracellular polyamine biosynthesis and uptake in response to increased intracellular polyamine levels. Binds to ODC monomers, inhibiting the assembly of the functional ODC homodimer, and targets the monomers for ubiquitin-independent proteolytic destruction by the 26S proteasome. Triggers ODC degradation by inducing the exposure of a cryptic proteasome-interacting surface of ODC. Stabilizes AZIN2 by interfering with its ubiquitination. Also inhibits cellular uptake of polyamines by inactivating the polyamine uptake transporter. SMAD1/OAZ1/PSMB4 complex mediates the degradation of the CREBBP/EP300 repressor SNIP1. Involved in the translocation of AZIN2 from ER-Golgi intermediate compartment (ERGIC) to the cytosol. This Rattus norvegicus (Rat) protein is Ornithine decarboxylase antizyme 1 (Oaz1).